A 269-amino-acid polypeptide reads, in one-letter code: Putative ABC transporter ATP-binding protein PF0528 (269 aa).

The ABC transporter domain occupies 6 to 237 (IVVENLYSSY…EILKRNNLDV (232 aa)). Position 39–46 (39–46 (GPNGAGKS)) interacts with ATP.

This sequence belongs to the ABC transporter superfamily.

It localises to the cell membrane. Functionally, probably part of an ABC transporter complex. Responsible for energy coupling to the transport system. The chain is Putative ABC transporter ATP-binding protein PF0528 from Pyrococcus furiosus (strain ATCC 43587 / DSM 3638 / JCM 8422 / Vc1).